Consider the following 141-residue polypeptide: Nucleoside diphosphate kinase (141 aa).

ATP is bound by residues lysine 11, phenylalanine 59, arginine 87, threonine 93, arginine 104, and asparagine 114. The active-site Pros-phosphohistidine intermediate is histidine 117.

This sequence belongs to the NDK family. As to quaternary structure, homotetramer. Mg(2+) is required as a cofactor.

The protein localises to the cytoplasm. The enzyme catalyses a 2'-deoxyribonucleoside 5'-diphosphate + ATP = a 2'-deoxyribonucleoside 5'-triphosphate + ADP. It carries out the reaction a ribonucleoside 5'-diphosphate + ATP = a ribonucleoside 5'-triphosphate + ADP. Its function is as follows. Major role in the synthesis of nucleoside triphosphates other than ATP. The ATP gamma phosphate is transferred to the NDP beta phosphate via a ping-pong mechanism, using a phosphorylated active-site intermediate. The sequence is that of Nucleoside diphosphate kinase from Xylella fastidiosa (strain 9a5c).